The following is a 231-amino-acid chain: L-ribulose-5-phosphate 4-epimerase SgbE (231 aa).

Substrate contacts are provided by residues glycine 27–asparagine 28, serine 44–glycine 45, and serine 74–serine 75. Zn(2+) contacts are provided by aspartate 76, histidine 95, and histidine 97. Aspartate 120 acts as the Proton donor/acceptor in catalysis. Histidine 171 provides a ligand contact to Zn(2+). The Proton donor/acceptor role is filled by tyrosine 229.

This sequence belongs to the aldolase class II family. AraD/FucA subfamily. The cofactor is Zn(2+).

The enzyme catalyses L-ribulose 5-phosphate = D-xylulose 5-phosphate. In terms of biological role, catalyzes the interconversion of L-ribulose 5-phosphate (LRu5P) and D-xylulose 5-phosphate (D-Xu5P) via a retroaldol/aldol mechanism (carbon-carbon bond cleavage analogous to a class II aldolase reaction). May be involved in the utilization of 2,3-diketo-L-gulonate. The chain is L-ribulose-5-phosphate 4-epimerase SgbE from Haemophilus influenzae (strain ATCC 51907 / DSM 11121 / KW20 / Rd).